Here is a 305-residue protein sequence, read N- to C-terminus: UDP-3-O-acyl-N-acetylglucosamine deacetylase (305 aa).

Residues His-79, His-238, and Asp-242 each coordinate Zn(2+). The active-site Proton donor is the His-265.

This sequence belongs to the LpxC family. Zn(2+) is required as a cofactor.

It carries out the reaction a UDP-3-O-[(3R)-3-hydroxyacyl]-N-acetyl-alpha-D-glucosamine + H2O = a UDP-3-O-[(3R)-3-hydroxyacyl]-alpha-D-glucosamine + acetate. It participates in glycolipid biosynthesis; lipid IV(A) biosynthesis; lipid IV(A) from (3R)-3-hydroxytetradecanoyl-[acyl-carrier-protein] and UDP-N-acetyl-alpha-D-glucosamine: step 2/6. In terms of biological role, catalyzes the hydrolysis of UDP-3-O-myristoyl-N-acetylglucosamine to form UDP-3-O-myristoylglucosamine and acetate, the committed step in lipid A biosynthesis. The polypeptide is UDP-3-O-acyl-N-acetylglucosamine deacetylase (Proteus mirabilis (strain HI4320)).